Reading from the N-terminus, the 173-residue chain is RNA silencing suppressor p19 (173 aa).

The span at M1 to G21 shows a compositional bias: basic and acidic residues. The segment at M1–D34 is disordered.

The protein belongs to the tombusvirus protein p19 family. In terms of assembly, homodimer.

Its function is as follows. Viral suppressor of RNA silencing which binds specifically to silencing RNAs (siRNAs). Acts as a molecular caliper to specifically select siRNAs based on the length of the duplex region of the RNA. The chain is RNA silencing suppressor p19 from Cucumis sativus (Cucumber).